A 208-amino-acid polypeptide reads, in one-letter code: dITP/XTP pyrophosphatase (208 aa).

Position 16-21 (16-21 (TGNAGK)) interacts with substrate. Mg(2+) is bound by residues glutamate 46 and aspartate 75. The active-site Proton acceptor is the aspartate 75. Substrate-binding positions include serine 76, 155–158 (FGYD), lysine 178, and 183–184 (HR).

It belongs to the HAM1 NTPase family. In terms of assembly, homodimer. Mg(2+) serves as cofactor.

It catalyses the reaction XTP + H2O = XMP + diphosphate + H(+). The enzyme catalyses dITP + H2O = dIMP + diphosphate + H(+). It carries out the reaction ITP + H2O = IMP + diphosphate + H(+). Functionally, pyrophosphatase that catalyzes the hydrolysis of nucleoside triphosphates to their monophosphate derivatives, with a high preference for the non-canonical purine nucleotides XTP (xanthosine triphosphate), dITP (deoxyinosine triphosphate) and ITP. Seems to function as a house-cleaning enzyme that removes non-canonical purine nucleotides from the nucleotide pool, thus preventing their incorporation into DNA/RNA and avoiding chromosomal lesions. The protein is dITP/XTP pyrophosphatase of Deinococcus deserti (strain DSM 17065 / CIP 109153 / LMG 22923 / VCD115).